The chain runs to 301 residues: Acetylglutamate kinase (301 aa).

Residues 72–73 (GG), R94, and N199 contribute to the substrate site.

The protein belongs to the acetylglutamate kinase family. ArgB subfamily.

It is found in the cytoplasm. It catalyses the reaction N-acetyl-L-glutamate + ATP = N-acetyl-L-glutamyl 5-phosphate + ADP. It functions in the pathway amino-acid biosynthesis; L-arginine biosynthesis; N(2)-acetyl-L-ornithine from L-glutamate: step 2/4. Functionally, catalyzes the ATP-dependent phosphorylation of N-acetyl-L-glutamate. In Bartonella henselae (strain ATCC 49882 / DSM 28221 / CCUG 30454 / Houston 1) (Rochalimaea henselae), this protein is Acetylglutamate kinase.